Reading from the N-terminus, the 76-residue chain is UPF0248 protein MmarC5_1387 (76 aa).

It belongs to the UPF0248 family.

The polypeptide is UPF0248 protein MmarC5_1387 (Methanococcus maripaludis (strain C5 / ATCC BAA-1333)).